A 380-amino-acid polypeptide reads, in one-letter code: Protein neprosin (380 aa).

An N-terminal signal peptide occupies residues 1 to 24; the sequence is MQAKFFTFVILSSVFYFNYPLAEA. Positions 25–128 are cleaved as a propeptide — activation peptide; sequence RSIQARLANK…QFPNLKFAPP (104 aa). A disulfide bridge connects residues cysteine 52 and cysteine 98. 3 N-linked (GlcNAc...) asparagine glycosylation sites follow: asparagine 68, asparagine 145, and asparagine 152. The 252-residue stretch at 129 to 380 folds into the Neprosin PEP catalytic domain; it reads SANTNHQYAV…YLFYGGPGCQ (252 aa). Glutamate 188 is a catalytic residue. An intrachain disulfide couples cysteine 219 to cysteine 224. N-linked (GlcNAc...) asparagine glycosylation is present at asparagine 253. The active site involves glutamate 297. A disulfide bond links cysteine 358 and cysteine 379.

Belongs to the peptidase G3 family.

It is found in the secreted. The enzyme catalyses Hydrolysis of Pro-|-Xaa &gt;&gt; Ala-|-Xaa in oligopeptides.. Weakly inhibited by the aspartic protease inhibitor pepstatin. Weakly inhibited by pepstatin A (IC(50) of 140 uM) and 1,2-epoxy-3-(p-nitrophenoxy)propane (EPNP) (IC(50) of 480 uM). Activity is not affected by the POP inhibitor Z-Pro-prolinal inhibitor or the denaturant urea. Its function is as follows. Glutamic endopeptidase that preferentially cleaves peptide bonds on the C-terminal side of proline residues. Also cleaves peptide bonds on the C-terminal side of alanine residues but with less efficiency. In contrast to most proline-cleaving enzymes, effectively degrades proteins of any size. Found in the viscoelastic fluid of the pitcher, and so likely functions in the digestion of their prey. The protein is Protein neprosin of Nepenthes x ventrata (Red tropical pitcher plant).